The chain runs to 274 residues: Large ribosomal subunit protein uL2 (274 aa).

Disordered regions lie at residues 34 to 54 (LEKK…TRHI) and 224 to 261 (VAMN…KTRA).

Belongs to the universal ribosomal protein uL2 family. As to quaternary structure, part of the 50S ribosomal subunit. Forms a bridge to the 30S subunit in the 70S ribosome.

In terms of biological role, one of the primary rRNA binding proteins. Required for association of the 30S and 50S subunits to form the 70S ribosome, for tRNA binding and peptide bond formation. It has been suggested to have peptidyltransferase activity; this is somewhat controversial. Makes several contacts with the 16S rRNA in the 70S ribosome. The protein is Large ribosomal subunit protein uL2 of Ectopseudomonas mendocina (strain ymp) (Pseudomonas mendocina).